The chain runs to 696 residues: Mitosis initiation protein fs(1)Ya (696 aa).

Disordered regions lie at residues 245–285 (NAST…RAWK), 336–379 (EHSS…YSTS), and 457–492 (IKFETPPKSSQQMRSNGEGDETKDQFFTPEPGTPEI). Low complexity-rich tracts occupy residues 270–281 (QQQQQQQQPLQQ) and 361–379 (SESSASEVNSGSSSSYSTS). The segment at 448–696 (TGAGINKKQI…REPIERMRRQ (249 aa)) is rich in charged AA. Phosphothreonine occurs at positions 478, 484, and 489. 2 consecutive short sequence motifs (nuclear localization signal) follow at residues 512 to 520 (PKKDKPKEK) and 534 to 538 (QPRVR). 2 disordered regions span residues 555-586 (DVGEPEVVDAEEEDEVFRPTNASTCNDKKLEA) and 603-696 (PASL…MRRQ). A compositionally biased stretch (acidic residues) spans 557 to 569 (GEPEVVDAEEEDE). 2 stretches are compositionally biased toward basic and acidic residues: residues 607–624 (RGEREKDRDRDRDSDKEN) and 685–696 (RPREPIERMRRQ).

It is found in the nucleus envelope. Its subcellular location is the nucleus. The protein localises to the nucleoplasm. The protein resides in the cytoplasm. Cell cycle-dependent nuclear envelope component required for embryonic mitosis. This chain is Mitosis initiation protein fs(1)Ya (fs(1)Ya), found in Drosophila melanogaster (Fruit fly).